The following is a 275-amino-acid chain: Large ribosomal subunit protein uL2 (275 aa).

The interval 223–275 is disordered; sequence VAMNPVDHPHGGGEGRTGEAREPVSPWGTPSKGFKTRRNKRTNNMIVQRRKRK. The segment covering 229 to 244 has biased composition (basic and acidic residues); sequence DHPHGGGEGRTGEARE.

It belongs to the universal ribosomal protein uL2 family. Part of the 50S ribosomal subunit. Forms a bridge to the 30S subunit in the 70S ribosome.

One of the primary rRNA binding proteins. Required for association of the 30S and 50S subunits to form the 70S ribosome, for tRNA binding and peptide bond formation. It has been suggested to have peptidyltransferase activity; this is somewhat controversial. Makes several contacts with the 16S rRNA in the 70S ribosome. The chain is Large ribosomal subunit protein uL2 from Bordetella petrii (strain ATCC BAA-461 / DSM 12804 / CCUG 43448).